Consider the following 150-residue polypeptide: Arginine repressor (150 aa).

Belongs to the ArgR family.

The protein localises to the cytoplasm. It functions in the pathway amino-acid biosynthesis; L-arginine biosynthesis [regulation]. In terms of biological role, regulates arginine biosynthesis genes. The protein is Arginine repressor of Carboxydothermus hydrogenoformans (strain ATCC BAA-161 / DSM 6008 / Z-2901).